Here is a 394-residue protein sequence, read N- to C-terminus: Zinc-regulated GTPase metalloprotein activator 1 (394 aa).

Positions 16 to 23 (EDCPELVP) match the psi-PxLVp motif motif. Residue 48–55 (GYLGAGKT) coordinates GTP. Zn(2+)-binding residues include cysteine 106, cysteine 108, and cysteine 109. A CXCC motif motif is present at residues 106-109 (CLCC). GTP-binding positions include 109–113 (CSVKD) and 202–205 (NKTD). Residues 272–375 (IVTVTFDVPG…ILQQLFITAV (104 aa)) enclose the CobW C-terminal domain.

It belongs to the SIMIBI class G3E GTPase family. ZNG1 subfamily.

It localises to the nucleus. It carries out the reaction GTP + H2O = GDP + phosphate + H(+). In terms of biological role, zinc chaperone that directly transfers zinc cofactor to target metalloproteins, thereby activating them. Catalyzes zinc insertion into the active site of methionine aminopeptidase METAP1, which function to cleave the initiator methionine from polypeptides during or after protein translation. Mechanistically, the N-terminal psi-PxLVp motif binds to the C6H2-type zinc finger of inactive form of METAP1. After formation of the docked complex, zinc is transferred from the CXCC motif in the GTPase domain of ZNG1 to the zinc binding site in the peptidase domain of METAP1 in a process requiring GTP hydrolysis. GTP/GDP exchange is required for release of active METAP1. The sequence is that of Zinc-regulated GTPase metalloprotein activator 1 (Zng1) from Rattus norvegicus (Rat).